The sequence spans 458 residues: Phosphoglucosamine mutase (458 aa).

The active-site Phosphoserine intermediate is the Ser108. Residues Ser108, Asp247, Asp249, and Asp251 each coordinate Mg(2+). Ser108 is modified (phosphoserine).

Belongs to the phosphohexose mutase family. The cofactor is Mg(2+). In terms of processing, activated by phosphorylation.

It carries out the reaction alpha-D-glucosamine 1-phosphate = D-glucosamine 6-phosphate. Catalyzes the conversion of glucosamine-6-phosphate to glucosamine-1-phosphate. This chain is Phosphoglucosamine mutase, found in Nitrosomonas eutropha (strain DSM 101675 / C91 / Nm57).